A 571-amino-acid chain; its full sequence is Cytochrome P450 monooxygenase g430 (571 aa).

A helical transmembrane segment spans residues glycine 8–isoleucine 28. Cysteine 471 contributes to the heme binding site. Positions cysteine 552 to serine 571 are disordered.

Belongs to the cytochrome P450 family. Heme serves as cofactor.

It localises to the membrane. Its pathway is mycotoxin biosynthesis. In terms of biological role, cytochrome P450 monooxygenase; part of the gene cluster that mediates the biosynthesis of 1233A, a natural compound known as an inhibitor of HMG-CoA synthase in the mevalonate pathway and with antibacterial and antifungal activities. The highly reducing polyketide synthase g433 is responsible for the 1233A backbone biosynthesis and the cytochrome P450 monooxygenase g430 catalyzes oxidation of the backbone. This Fusarium sp protein is Cytochrome P450 monooxygenase g430.